Consider the following 1966-residue polypeptide: Histone-lysine N-methyltransferase SETD1B (1966 aa).

Basic residues predominate over residues 1–12 (MENSHPPHHHHQ). The interval 1–26 (MENSHPPHHHHQQPPPQPGPSGERRN) is disordered. The tract at residues 68 to 98 (VEDPRVVGIWTKNKELELSVPKFKIDEFYVG) is interaction with WDR82. The region spanning 93–181 (DEFYVGPVPP…NIIHVELDTK (89 aa)) is the RRM domain. Disordered stretches follow at residues 235-302 (GCGS…LFSQ), 357-660 (VGGT…PKPM), 675-719 (LAPT…PPPA), 963-1462 (KVKR…SGPL), 1501-1541 (PPLL…RPPA), 1555-1606 (QPQT…KLPF), and 1636-1668 (AKSR…PQPL). 3 stretches are compositionally biased toward polar residues: residues 243–259 (VTPN…TAYS), 265–274 (TPNSYGQGTP), and 282–300 (PFSQ…SYLF). Pro residues-rich tracts occupy residues 432–441 (PAPPPLPPAE) and 449–458 (GTPPGPPPPD). The span at 493-521 (EKPHDSLDSRIEMLLKEQRTKLLFLREPD) shows a compositional bias: basic and acidic residues. Positions 531-543 (SPISSSSSQLSPL) are enriched in low complexity. Pro residues predominate over residues 592–603 (PRPPPEPGPPDP). A compositionally biased stretch (acidic residues) spans 637-646 (EDMEISDDEM). Residues 679 to 719 (LPLPPPPGFPPLPPPPPPPPPQPGFPMPPPLPPPPPPPPPA) are compositionally biased toward pro residues. Phosphoserine occurs at positions 986 and 994. Positions 995-1015 (ERERDRDMADTPCELAKRDPK) are enriched in basic and acidic residues. Position 1031 is a phosphoserine (Ser1031). Residues 1041 to 1064 (LSASSSSSASSSSGSSTTSPSSSA) are compositionally biased toward low complexity. Acidic residues-rich tracts occupy residues 1067–1087 (KEEE…EEEE) and 1104–1142 (KDDD…EEET). The span at 1148–1174 (SKAEATSSSESSESSEFESSSESSPSS) shows a compositional bias: low complexity. Residues 1173–1204 (SSSEDEEEVVAREEEEEEEEEEMVAEESMASA) are a coiled coil. 2 stretches are compositionally biased toward acidic residues: residues 1175–1197 (SEDE…EMVA) and 1229–1238 (GMEEEVDIET). 3 positions are modified to phosphoserine: Ser1265, Ser1283, and Ser1335. Residues 1312-1340 (EPPMMLPLPLQPPLPPPRPPRPPSPPPEP) are compositionally biased toward pro residues. Low complexity predominate over residues 1383–1425 (PGGEPPLSGGSSGLSLSSPQVPGSPFSYPAPSPSLSSGGLPRT). Positions 1501–1514 (PPLLPAPLASCPPP) are enriched in pro residues. Residues 1515–1524 (MKRKPGRPRR) show a composition bias toward basic residues. Over residues 1580 to 1600 (PAPPPPLPPQPPPPPPPPPVE) the composition is skewed to pro residues. Ser1659 and Ser1663 each carry phosphoserine. The WDR5 interaction motif (WIN) signature appears at 1745-1750 (GCARSE). The segment at 1767-1800 (SRASTDEPPADTQGMSIPAQPHASTRAGSERRSE) is disordered. A RxxxRR motif motif is present at residues 1798-1803 (RSEQRR). One can recognise an SET domain in the interval 1827–1944 (KKLKFCKSHI…VNEEITYDYK (118 aa)). Tyr1943 lines the S-adenosyl-L-methionine pocket. The region spanning 1950-1966 (VKIPCLCGSENCRGTLN) is the Post-SET domain.

Belongs to the class V-like SAM-binding methyltransferase superfamily. In terms of assembly, component of the SET1B/COMPASS complex composed of the catalytic subunit SETD1B, WDR5, WDR82, RBBP5, ASH2L/ASH2, CXXC1/CFP1, HCFC1, DPY30 homotrimer and BOD1. Forms a core complex with the evolutionary conserved subcomplex WRAD composed of WDR5, RBBP5, ASH2L/ASH2 and DPY30 subunits; WRAD differentially stimulates the methyltransferase activity. Interacts with HCFC1 and ASH2L/ASH2. Interacts (via N-terminal region) with WDR82. Interacts (via the RRM domain) with hyperphosphorylated C-terminal domain (CTD) of RNA polymerase II large subunit (POLR2A) only in the presence of WDR82. Binds specifically to CTD heptad repeats phosphorylated on 'Ser-5' of each heptad. Interacts with RBM15. Interacts (via WIN motif) with WDR5.

It is found in the nucleus. Its subcellular location is the nucleus speckle. It localises to the chromosome. The protein localises to the cytoplasm. It carries out the reaction L-lysyl(4)-[histone H3] + S-adenosyl-L-methionine = N(6)-methyl-L-lysyl(4)-[histone H3] + S-adenosyl-L-homocysteine + H(+). It catalyses the reaction N(6)-methyl-L-lysyl(4)-[histone H3] + S-adenosyl-L-methionine = N(6),N(6)-dimethyl-L-lysyl(4)-[histone H3] + S-adenosyl-L-homocysteine + H(+). The enzyme catalyses N(6),N(6)-dimethyl-L-lysyl(4)-[histone H3] + S-adenosyl-L-methionine = N(6),N(6),N(6)-trimethyl-L-lysyl(4)-[histone H3] + S-adenosyl-L-homocysteine + H(+). In terms of biological role, histone methyltransferase that catalyzes methyl group transfer from S-adenosyl-L-methionine to the epsilon-amino group of 'Lys-4' of histone H3 (H3K4) via a non-processive mechanism. Part of chromatin remodeling machinery, forms H3K4me1, H3K4me2 and H3K4me3 methylation marks at active chromatin sites where transcription and DNA repair take place. Plays an essential role in regulating the transcriptional programming of multipotent hematopoietic progenitor cells and lymphoid lineage specification during hematopoiesis. This chain is Histone-lysine N-methyltransferase SETD1B (SETD1B), found in Homo sapiens (Human).